Reading from the N-terminus, the 211-residue chain is Small ribosomal subunit protein uS4 (211 aa).

Positions 98–161 constitute an S4 RNA-binding domain; the sequence is RRLDNVVYRL…RDIPFIKENL (64 aa).

This sequence belongs to the universal ribosomal protein uS4 family. In terms of assembly, part of the 30S ribosomal subunit. Contacts protein S5. The interaction surface between S4 and S5 is involved in control of translational fidelity.

Its function is as follows. One of the primary rRNA binding proteins, it binds directly to 16S rRNA where it nucleates assembly of the body of the 30S subunit. Functionally, with S5 and S12 plays an important role in translational accuracy. In Aquifex aeolicus (strain VF5), this protein is Small ribosomal subunit protein uS4.